The following is an 80-amino-acid chain: Conotoxin Bu14 (80 aa).

The signal sequence occupies residues 1–8 (AACQLGTA). The propeptide occupies 9-40 (ASFARDKQDYPAVRSDGRQDSKDSTLDRIAKR). Disulfide bonds link Cys-41–Cys-55, Cys-48–Cys-59, and Cys-54–Cys-69.

This sequence belongs to the conotoxin O1 superfamily. As to expression, expressed by the venom duct.

The protein localises to the secreted. This chain is Conotoxin Bu14, found in Conus bullatus (Bubble cone).